Reading from the N-terminus, the 478-residue chain is Divinyl ether synthase CYP74D3 (478 aa).

Cysteine 432 contributes to the heme binding site.

This sequence belongs to the cytochrome P450 family. 9-divinyl ether synthase subfamily. Not detected in leaves, stems or roots of healthy plants.

It is found in the cytoplasm. The protein resides in the cytosol. It carries out the reaction (9S)-hydroperoxy-(10E,12Z)-octadecadienoate = colneleate + H2O. The enzyme catalyses (9S)-hydroperoxy-(10E,12Z,15Z)-octadecatrienoate = colnelenate + H2O. In terms of biological role, strictly inducible cytochrome P450 involved in the biosynthesis of the anti-fungal toxins colneleate and colnelenate. Can use (9S)-hydroperoxy-(10E,12Z)-octadecadienoate (9-HPOD) and (9S)-hydroperoxy-(10E,12Z,15Z)-octadecatrienoate (9-HPOT) as substrates, but has a very low activity with the corresponding 13-hydroperoxides (13-HPOD and 13-POT). In Nicotiana tabacum (Common tobacco), this protein is Divinyl ether synthase CYP74D3.